The primary structure comprises 417 residues: Gamma-glutamyl phosphate reductase (417 aa).

This sequence belongs to the gamma-glutamyl phosphate reductase family.

The protein localises to the cytoplasm. It catalyses the reaction L-glutamate 5-semialdehyde + phosphate + NADP(+) = L-glutamyl 5-phosphate + NADPH + H(+). It functions in the pathway amino-acid biosynthesis; L-proline biosynthesis; L-glutamate 5-semialdehyde from L-glutamate: step 2/2. Functionally, catalyzes the NADPH-dependent reduction of L-glutamate 5-phosphate into L-glutamate 5-semialdehyde and phosphate. The product spontaneously undergoes cyclization to form 1-pyrroline-5-carboxylate. The sequence is that of Gamma-glutamyl phosphate reductase from Heliobacterium modesticaldum (strain ATCC 51547 / Ice1).